The primary structure comprises 141 residues: Large ribosomal subunit protein uL11 (141 aa).

The protein belongs to the universal ribosomal protein uL11 family. Part of the ribosomal stalk of the 50S ribosomal subunit. Interacts with L10 and the large rRNA to form the base of the stalk. L10 forms an elongated spine to which L12 dimers bind in a sequential fashion forming a multimeric L10(L12)X complex. Post-translationally, one or more lysine residues are methylated.

Functionally, forms part of the ribosomal stalk which helps the ribosome interact with GTP-bound translation factors. This chain is Large ribosomal subunit protein uL11, found in Synechococcus sp. (strain CC9605).